The chain runs to 241 residues: Methylosome subunit pICln (241 aa).

The segment at 88–112 is disordered; that stretch reads EDKEAHMADQEEEESEDDDDDEEPI. The span at 97-112 shows a compositional bias: acidic residues; that stretch reads QEEEESEDDDDDEEPI.

This sequence belongs to the pICln (TC 1.A.47) family. Component of the methylosome, a 20S complex containing at least clns1a/picln, prmt5/skb1 and wdr77/mep50; may mediate snrpd1 and snrpd3 methylation. Forms a 6S pICln-Sm complex composed of clns1a/picln, snrpd1, snrpd2, snrpe, snrpf and snrpg; ring-like structure where clns1a/pICln mimics additional Sm proteins and which is unable to assemble into the core snRNP.

The protein resides in the cytoplasm. Its subcellular location is the cytosol. It is found in the nucleus. It localises to the cytoskeleton. Involved in both the assembly of spliceosomal snRNPs and the methylation of Sm proteins. Chaperone that regulates the assembly of spliceosomal U1, U2, U4 and U5 small nuclear ribonucleoproteins (snRNPs), the building blocks of the spliceosome, and thereby plays an important role in the splicing of cellular pre-mRNAs. Most spliceosomal snRNPs contain a common set of Sm proteins SNRPB, SNRPD1, SNRPD2, SNRPD3, SNRPE, SNRPF and SNRPG that assemble in a heptameric protein ring on the Sm site of the small nuclear RNA to form the core snRNP (Sm core). In the cytosol, the Sm proteins SNRPD1, SNRPD2, SNRPE, SNRPF and SNRPG are trapped in an inactive 6S pICln-Sm complex by the chaperone CLNS1A that controls the assembly of the core snRNP. Dissociation by the SMN complex of CLNS1A from the trapped Sm proteins and their transfer to an SMN-Sm complex triggers the assembly of core snRNPs and their transport to the nucleus. This is Methylosome subunit pICln (clns1a) from Xenopus laevis (African clawed frog).